The chain runs to 313 residues: Leucine zipper protein 4 (313 aa).

The segment at 1 to 119 is interaction with DDX39B/UAP56; sequence MASFRKLTLS…PLIEQEKCSD (119 aa). Disordered stretches follow at residues 1–238 and 290–313; these read MASF…QGDL and QSGRSHGQSERHQRYSTGKNTITT. Positions 22–40 match the UAP56-binding motif (UBM); required for proper nuclear localization motif; the sequence is KVNFLDMSLDDIIIYKELE. Basic and acidic residues predominate over residues 34 to 60; it reads IIYKELEGTNAEEEKNKRQNHSKKESP. The interval 51–80 is arg-rich; required for RNA-binding; that stretch reads RQNHSKKESPSRQQSKAHRHRHRRGYSRCR. Basic residues predominate over residues 65–77; it reads SKAHRHRHRRGYS. A compositionally biased stretch (basic and acidic residues) spans 81–92; that stretch reads SNSEEGNHDKKP. A compositionally biased stretch (polar residues) spans 126–141; it reads EKNQGQSEGNQHQSEG. Residues 142–168 are compositionally biased toward basic and acidic residues; sequence NPDKSEESQGQPEENHHSERSRNHLER. The span at 169–179 shows a compositional bias: polar residues; that stretch reads SLSQSDRSQGQ. Positions 178-236 are RS-containing His-rich (RS-H); necessary for nuclear localization; it reads GQLKRHHPQYERSHGQYKRSHGQSERSHGHSERSHGHSERSHGHSERSHGHSKRSRSQG. Positions 199-226 are enriched in basic and acidic residues; that stretch reads GQSERSHGHSERSHGHSERSHGHSERSH. Position 234 is a phosphoserine (serine 234). Residues 238–287 are leucine-zipper; required for RNA-binding and for its relocalization to the cytoplasm during cell division; the sequence is LVDTQSDLIATQRDLIATQKDLIATQRDLIATQRDLIVTQRDLVATERDL. The interval 241-313 is interaction with NXF1; sequence TQSDLIATQR…YSTGKNTITT (73 aa). Positions 304–313 are enriched in polar residues; sequence YSTGKNTITT.

As to quaternary structure, interacts with NXF1, NXF2, THOC1, THOC5, DDX39B/UAP56 and SRRT. In terms of tissue distribution, expressed specifically in testis. Also expressed in a wide variety of cancer types, but particularly high levels of expression observed in melanoma cells.

It is found in the nucleus. The protein resides in the cytoplasm. Functionally, export adapter involved in mRNA nuclear export in cancer cells. Binds and enhances the RNA-binding activity of the nuclear RNA export factor NXF1. Can restore mRNA export function in cells compromised by loss of mRNA export adapters. This Homo sapiens (Human) protein is Leucine zipper protein 4 (LUZP4).